The primary structure comprises 1128 residues: Translation initiation factor IF-2 (1128 aa).

A disordered region spans residues 57-519 (NSDKQILSIN…KETTRQRQKR (463 aa)). The segment covering 70–83 (NKKDNYKQNKEDKS) has biased composition (basic and acidic residues). Over residues 100 to 110 (KKQLLNKPLNK) the composition is skewed to low complexity. Residues 120 to 146 (QLKNPNKPNIYNSSQSQANLTNQNTKS) are compositionally biased toward polar residues. Over residues 147-158 (KPSEHFNKDKKT) the composition is skewed to basic and acidic residues. Positions 182–196 (KNINNNLKSNESSKN) are enriched in low complexity. Over residues 201–214 (GDKRELSLKPDQNR) the composition is skewed to basic and acidic residues. 2 stretches are compositionally biased toward polar residues: residues 243–267 (KQNN…NRPG) and 386–397 (AKTNNQKQNIES). A compositionally biased stretch (basic and acidic residues) spans 432–445 (RKDWDDSAKLEALR). The span at 499 to 519 (HKSTKQFKKKKKETTRQRQKR) shows a compositional bias: basic residues. The region spanning 620–792 (KRPPVITVMG…ILLVSEVEDL (173 aa)) is the tr-type G domain. The segment at 629–636 (GHVDHGKT) is G1. 629-636 (GHVDHGKT) provides a ligand contact to GTP. Positions 654–658 (GITQH) are G2. The tract at residues 679-682 (DTPG) is G3. GTP is bound by residues 679–683 (DTPGH) and 733–736 (NKID). Positions 733–736 (NKID) are G4. The G5 stretch occupies residues 769–771 (SAI).

This sequence belongs to the TRAFAC class translation factor GTPase superfamily. Classic translation factor GTPase family. IF-2 subfamily.

It is found in the cytoplasm. Its function is as follows. One of the essential components for the initiation of protein synthesis. Protects formylmethionyl-tRNA from spontaneous hydrolysis and promotes its binding to the 30S ribosomal subunits. Also involved in the hydrolysis of GTP during the formation of the 70S ribosomal complex. This Prochlorococcus marinus (strain MIT 9312) protein is Translation initiation factor IF-2.